A 53-amino-acid chain; its full sequence is MISNYEPLLLLVITCCVLLFNFTISSKTKIDIIFAVQTIVFIWFIFHFVYSAI.

2 helical membrane passes run 5-25 (YEPL…FTIS) and 30-50 (IDII…HFVY).

Belongs to the orthopoxvirus OPG141 protein family. Post-translationally, not phosphorylated.

It localises to the virion membrane. In terms of biological role, protein probably involved in counteracting host defense, since it enhances virulence in vivo. The protein is Virion membrane protein OPG141 (OPG141) of Cynomys gunnisoni (Gunnison's prairie dog).